The primary structure comprises 312 residues: Short chain dehydrogenase pgmD (312 aa).

Residues Val-46, Ile-47, Lys-171, Tyr-207, Lys-211, and Thr-242 each coordinate NADP(+). The active-site Proton donor is the Tyr-207. Lys-211 functions as the Lowers pKa of active site Tyr in the catalytic mechanism.

It belongs to the short-chain dehydrogenases/reductases (SDR) family.

The protein operates within pigment biosynthesis. It functions in the pathway secondary metabolite biosynthesis. Short chain dehydrogenase; part of the gene cluster that mediates the biosynthesis of pleosporalin A, ascomycone A, as well as a third cryptic naphthoquinone derived pigment, all responsible for the coloration of conidia. Essential for the production of pleosporalin A, but not the 2 other final products. The pathway begins with the biosynthesis of the cyclized heptaketide 3-acetonyl-1,6,8-trihydroxy-2-naphthaldehyde by the NR-PKS pgmA. The C-6 hydroxyl group is further methylated by the O-methyltransferase pgmB to yield fusarubinaldehyde which is in turn oxidized by the cytochrome P450 monooxygenase pgmC at C-9. The C-1 hydroxyl group is then methylated spontaneously. Although pgmE, pgmD and pgmH are essential for the production of pleosporalin A, it is not the case for the 2 other final products and it remains difficult to assign a specific function to each enzyme. PgmF and pgmG seem not to be involved in pigment biosynthesis although they were regulated by the cluster-specific transcription factor pgmR. This is Short chain dehydrogenase pgmD from Aspergillus terreus (strain NIH 2624 / FGSC A1156).